Here is a 189-residue protein sequence, read N- to C-terminus: Peptidyl-tRNA hydrolase (189 aa).

Tyrosine 16 provides a ligand contact to tRNA. Histidine 21 acts as the Proton acceptor in catalysis. Residues phenylalanine 67, asparagine 69, and asparagine 115 each coordinate tRNA.

It belongs to the PTH family. In terms of assembly, monomer.

The protein localises to the cytoplasm. It catalyses the reaction an N-acyl-L-alpha-aminoacyl-tRNA + H2O = an N-acyl-L-amino acid + a tRNA + H(+). In terms of biological role, hydrolyzes ribosome-free peptidyl-tRNAs (with 1 or more amino acids incorporated), which drop off the ribosome during protein synthesis, or as a result of ribosome stalling. Its function is as follows. Catalyzes the release of premature peptidyl moieties from peptidyl-tRNA molecules trapped in stalled 50S ribosomal subunits, and thus maintains levels of free tRNAs and 50S ribosomes. This is Peptidyl-tRNA hydrolase from Legionella pneumophila (strain Lens).